Reading from the N-terminus, the 122-residue chain is Small ribosomal subunit protein uS13 (122 aa).

Residues 95-122 (GLPVRGQRTKTNARTRKGPKKTIAGKKK) form a disordered region.

This sequence belongs to the universal ribosomal protein uS13 family. As to quaternary structure, part of the 30S ribosomal subunit. Forms a loose heterodimer with protein S19. Forms two bridges to the 50S subunit in the 70S ribosome.

Functionally, located at the top of the head of the 30S subunit, it contacts several helices of the 16S rRNA. In the 70S ribosome it contacts the 23S rRNA (bridge B1a) and protein L5 of the 50S subunit (bridge B1b), connecting the 2 subunits; these bridges are implicated in subunit movement. Contacts the tRNAs in the A and P-sites. This chain is Small ribosomal subunit protein uS13, found in Corynebacterium diphtheriae (strain ATCC 700971 / NCTC 13129 / Biotype gravis).